A 142-amino-acid polypeptide reads, in one-letter code: Nucleoside diphosphate kinase (142 aa).

The ATP site is built by Lys11, Phe59, Arg87, Thr93, Arg107, and Asn117. His120 (pros-phosphohistidine intermediate) is an active-site residue.

This sequence belongs to the NDK family. Homotetramer. Requires Mg(2+) as cofactor.

It localises to the cytoplasm. The catalysed reaction is a 2'-deoxyribonucleoside 5'-diphosphate + ATP = a 2'-deoxyribonucleoside 5'-triphosphate + ADP. The enzyme catalyses a ribonucleoside 5'-diphosphate + ATP = a ribonucleoside 5'-triphosphate + ADP. In terms of biological role, major role in the synthesis of nucleoside triphosphates other than ATP. The ATP gamma phosphate is transferred to the NDP beta phosphate via a ping-pong mechanism, using a phosphorylated active-site intermediate. This is Nucleoside diphosphate kinase from Aquifex aeolicus (strain VF5).